The following is a 132-amino-acid chain: Small ribosomal subunit protein uS8c (132 aa).

This sequence belongs to the universal ribosomal protein uS8 family. In terms of assembly, part of the 30S ribosomal subunit.

It localises to the plastid. Its subcellular location is the chloroplast. In terms of biological role, one of the primary rRNA binding proteins, it binds directly to 16S rRNA central domain where it helps coordinate assembly of the platform of the 30S subunit. In Adiantum capillus-veneris (Maidenhair fern), this protein is Small ribosomal subunit protein uS8c (rps8).